A 355-amino-acid polypeptide reads, in one-letter code: Histidinol-phosphate aminotransferase (355 aa).

K218 bears the N6-(pyridoxal phosphate)lysine mark.

The protein belongs to the class-II pyridoxal-phosphate-dependent aminotransferase family. Histidinol-phosphate aminotransferase subfamily. Homodimer. Pyridoxal 5'-phosphate serves as cofactor.

It carries out the reaction L-histidinol phosphate + 2-oxoglutarate = 3-(imidazol-4-yl)-2-oxopropyl phosphate + L-glutamate. Its pathway is amino-acid biosynthesis; L-histidine biosynthesis; L-histidine from 5-phospho-alpha-D-ribose 1-diphosphate: step 7/9. In Chlorobium limicola (strain DSM 245 / NBRC 103803 / 6330), this protein is Histidinol-phosphate aminotransferase.